The sequence spans 240 residues: Uridylate kinase (240 aa).

13 to 16 (KASG) serves as a coordination point for ATP. The involved in allosteric activation by GTP stretch occupies residues 21–26 (GSQGFG). G55 lines the UMP pocket. Positions 56 and 60 each coordinate ATP. UMP-binding positions include D75 and 136-143 (TGNPFFTT). ATP is bound by residues T163, Q164, Y169, and D172.

This sequence belongs to the UMP kinase family. As to quaternary structure, homohexamer.

It localises to the cytoplasm. It catalyses the reaction UMP + ATP = UDP + ADP. The protein operates within pyrimidine metabolism; CTP biosynthesis via de novo pathway; UDP from UMP (UMPK route): step 1/1. With respect to regulation, allosterically activated by GTP. Inhibited by UTP. Functionally, catalyzes the reversible phosphorylation of UMP to UDP. This chain is Uridylate kinase, found in Brucella melitensis biotype 1 (strain ATCC 23456 / CCUG 17765 / NCTC 10094 / 16M).